Reading from the N-terminus, the 313-residue chain is Sideroflexin-4 (313 aa).

5 helical membrane-spanning segments follow: residues 87–107, 141–161, 175–191, 230–247, and 269–289; these read AALL…VKSL, LLLG…PRLL, FIPV…NVIA, VVLF…AYFF, and VLVM…IGRI.

This sequence belongs to the sideroflexin family.

It localises to the mitochondrion inner membrane. In terms of biological role, mitochondrial amino-acid transporter. Does not act as a serine transporter: not able to mediate transport of serine into mitochondria. In Bos taurus (Bovine), this protein is Sideroflexin-4.